A 215-amino-acid chain; its full sequence is Urease accessory protein UreG (215 aa).

15 to 22 (GPVGSGKT) provides a ligand contact to GTP.

It belongs to the SIMIBI class G3E GTPase family. UreG subfamily. Homodimer. UreD, UreF and UreG form a complex that acts as a GTP-hydrolysis-dependent molecular chaperone, activating the urease apoprotein by helping to assemble the nickel containing metallocenter of UreC. The UreE protein probably delivers the nickel.

The protein localises to the cytoplasm. Functionally, facilitates the functional incorporation of the urease nickel metallocenter. This process requires GTP hydrolysis, probably effectuated by UreG. The protein is Urease accessory protein UreG of Alcanivorax borkumensis (strain ATCC 700651 / DSM 11573 / NCIMB 13689 / SK2).